A 338-amino-acid polypeptide reads, in one-letter code: Lumican (338 aa).

A signal peptide spans 1–18 (MSLSAFTLFLALIGGTSG). The residue at position 19 (Gln19) is a Pyrrolidone carboxylic acid. Sulfotyrosine is present on residues Tyr20, Tyr21, Tyr23, and Tyr30. The LRRNT domain maps to 28–66 (SIYGQSSPNCAPECNCPESYPSAMYCDELKLKSVPMVPP). LRR repeat units lie at residues 67-88 (GIKYLYLRNNQIDHIDEKAFEN), 91-114 (DLQWLILDHNLLENSKIKGRVFSK), 117-137 (QLKKLHINHNNLTESVGPLPK), 138-159 (SLEDLQLTHNKITKLGSFEGLV), 160-181 (NLTFIHLQHNRLKEDAVSAAFK), 185-205 (SLEYLDLSFNQIARLPSGLPV), 206-227 (SLLTLYLDNNKISNIPDEYFKR), 230-253 (ALQYLRLSHNELADSGIPGNSFNV), 255-276 (SLVELDLSYNKLKNIPTVNENL), and 277-296 (ENYYLEVNQLEKFDIKSFCK). A glycan (N-linked (GlcNAc...) (keratan sulfate) asparagine) is linked at Asn88. Asn127 carries an N-linked (GlcNAc...) (keratan sulfate) asparagine glycan. Asn160 is a glycosylation site (N-linked (GlcNAc...) (keratan sulfate) asparagine). A glycan (N-linked (GlcNAc...) (keratan sulfate) asparagine) is linked at Asn252. Cys295 and Cys328 form a disulfide bridge. The residue at position 304 (Ser304) is a Phosphoserine. The LRR 11 repeat unit spans residues 305-326 (KIKHLRLDGNRISETSLPPDMY).

This sequence belongs to the small leucine-rich proteoglycan (SLRP) family. SLRP class II subfamily. As to quaternary structure, binds to laminin. Sulfated on tyrosine residue(s). In terms of processing, contains keratan sulfate. As to expression, cornea and other tissues.

The protein resides in the secreted. It localises to the extracellular space. The protein localises to the extracellular matrix. This Homo sapiens (Human) protein is Lumican (LUM).